The primary structure comprises 426 residues: Gamma-glutamylputrescine oxidoreductase (426 aa).

Belongs to the gamma-glutamylputrescine oxidoreductase family.

The enzyme catalyses gamma-L-glutamylputrescine + O2 + H2O = 4-(gamma-L-glutamylamino)butanal + H2O2 + NH4(+). It participates in amine and polyamine degradation; putrescine degradation; 4-aminobutanoate from putrescine: step 2/4. Its function is as follows. Involved in the breakdown of putrescine via the oxidation of L-glutamylputrescine. The protein is Gamma-glutamylputrescine oxidoreductase (puuB) of Escherichia coli (strain K12).